Reading from the N-terminus, the 253-residue chain is Sulfate transporter CysZ (253 aa).

The next 4 helical transmembrane spans lie at 27–47, 71–91, 150–170, and 211–231; these read FVLL…YLAV, ILWP…FTVV, LFIL…WLLF, and IVYV…AAVA.

The protein belongs to the CysZ family.

The protein resides in the cell inner membrane. Its function is as follows. High affinity, high specificity proton-dependent sulfate transporter, which mediates sulfate uptake. Provides the sulfur source for the cysteine synthesis pathway. This Pseudomonas syringae pv. tomato (strain ATCC BAA-871 / DC3000) protein is Sulfate transporter CysZ.